Reading from the N-terminus, the 200-residue chain is Alpha-amylase/subtilisin inhibitor (200 aa).

The signal sequence occupies residues 1–22 (MVSLRLPLILLSLLAISFSCSA). Disulfide bonds link C63/C112 and C162/C166.

This sequence belongs to the protease inhibitor I3 (leguminous Kunitz-type inhibitor) family.

Functionally, this protein inhibits independently subtilisin and T.castaneum alpha-amylase but not barley alpha-amylase. The chain is Alpha-amylase/subtilisin inhibitor (RASI) from Oryza sativa subsp. japonica (Rice).